A 421-amino-acid polypeptide reads, in one-letter code: Medium-chain specific acyl-CoA dehydrogenase, mitochondrial (421 aa).

The transit peptide at 1–25 (MAAALRRGYKVLRSVSHFECRAQHT) directs the protein to the mitochondrion. An N6-acetyllysine; alternate modification is found at Lys69. Lys69 carries the post-translational modification N6-succinyllysine; alternate. Lys79 carries the N6-acetyllysine modification. 158 to 167 (YCVTEPSAGS) contributes to the FAD binding site. Ser167 contacts octanoyl-CoA. At Lys179 the chain carries N6-succinyllysine. Position 191–193 (191–193 (WIT)) interacts with FAD. Lys212 is modified (N6-acetyllysine; alternate). Lys212 is modified (N6-succinyllysine; alternate). Ser216 contributes to the octanoyl-CoA binding site. N6-acetyllysine; alternate is present on residues Lys217, Lys259, and Lys271. N6-succinyllysine; alternate occurs at positions 217, 259, and 271. Octanoyl-CoA contacts are provided by Asp278 and Arg281. Lys301 carries the N6-acetyllysine modification. FAD-binding positions include 306–308 (RKT) and 316–317 (HQ). The octanoyl-CoA site is built by Arg349 and Thr351. Thr351 carries the post-translational modification Phosphothreonine. 374-378 (QIFGG) contacts FAD. Glu401 is a binding site for octanoyl-CoA. Glu401 acts as the Proton acceptor in catalysis. 402–405 (GTAQ) lines the FAD pocket.

It belongs to the acyl-CoA dehydrogenase family. As to quaternary structure, homotetramer. Interacts with the heterodimeric electron transfer flavoprotein ETF. FAD serves as cofactor. In terms of processing, acetylated. Could occur at proximity of the cofactor-binding sites and reduce the catalytic activity. Could be deacetylated by SIRT3.

The protein resides in the mitochondrion matrix. It catalyses the reaction a medium-chain 2,3-saturated fatty acyl-CoA + oxidized [electron-transfer flavoprotein] + H(+) = a medium-chain (2E)-enoyl-CoA + reduced [electron-transfer flavoprotein]. It carries out the reaction pentanoyl-CoA + oxidized [electron-transfer flavoprotein] + H(+) = (2E)-pentenoyl-CoA + reduced [electron-transfer flavoprotein]. The catalysed reaction is hexanoyl-CoA + oxidized [electron-transfer flavoprotein] + H(+) = (2E)-hexenoyl-CoA + reduced [electron-transfer flavoprotein]. The enzyme catalyses octanoyl-CoA + oxidized [electron-transfer flavoprotein] + H(+) = (2E)-octenoyl-CoA + reduced [electron-transfer flavoprotein]. It catalyses the reaction decanoyl-CoA + oxidized [electron-transfer flavoprotein] + H(+) = (2E)-decenoyl-CoA + reduced [electron-transfer flavoprotein]. It carries out the reaction dodecanoyl-CoA + oxidized [electron-transfer flavoprotein] + H(+) = (2E)-dodecenoyl-CoA + reduced [electron-transfer flavoprotein]. The catalysed reaction is tetradecanoyl-CoA + oxidized [electron-transfer flavoprotein] + H(+) = (2E)-tetradecenoyl-CoA + reduced [electron-transfer flavoprotein]. The enzyme catalyses oxidized [electron-transfer flavoprotein] + hexadecanoyl-CoA + H(+) = (2E)-hexadecenoyl-CoA + reduced [electron-transfer flavoprotein]. It participates in lipid metabolism; mitochondrial fatty acid beta-oxidation. Medium-chain specific acyl-CoA dehydrogenase is one of the acyl-CoA dehydrogenases that catalyze the first step of mitochondrial fatty acid beta-oxidation, an aerobic process breaking down fatty acids into acetyl-CoA and allowing the production of energy from fats. The first step of fatty acid beta-oxidation consists in the removal of one hydrogen from C-2 and C-3 of the straight-chain fatty acyl-CoA thioester, resulting in the formation of trans-2-enoyl-CoA. Electron transfer flavoprotein (ETF) is the electron acceptor that transfers electrons to the main mitochondrial respiratory chain via ETF-ubiquinone oxidoreductase (ETF dehydrogenase). Among the different mitochondrial acyl-CoA dehydrogenases, medium-chain specific acyl-CoA dehydrogenase acts specifically on acyl-CoAs with saturated 6 to 12 carbons long primary chains. The sequence is that of Medium-chain specific acyl-CoA dehydrogenase, mitochondrial from Rattus norvegicus (Rat).